Reading from the N-terminus, the 154-residue chain is Myoglobin (154 aa).

The Globin domain occupies valine 2 to lysine 148. Phosphoserine is present on serine 4. A nitrite-binding site is contributed by histidine 65. Histidine 65 provides a ligand contact to O2. Threonine 68 is subject to Phosphothreonine. A heme b-binding site is contributed by histidine 94.

It belongs to the globin family. As to quaternary structure, monomeric.

Its subcellular location is the cytoplasm. The protein resides in the sarcoplasm. The enzyme catalyses Fe(III)-heme b-[protein] + nitric oxide + H2O = Fe(II)-heme b-[protein] + nitrite + 2 H(+). It carries out the reaction H2O2 + AH2 = A + 2 H2O. Its function is as follows. Monomeric heme protein which primary function is to store oxygen and facilitate its diffusion within muscle tissues. Reversibly binds oxygen through a pentacoordinated heme iron and enables its timely and efficient release as needed during periods of heightened demand. Depending on the oxidative conditions of tissues and cells, and in addition to its ability to bind oxygen, it also has a nitrite reductase activity whereby it regulates the production of bioactive nitric oxide. Under stress conditions, like hypoxia and anoxia, it also protects cells against reactive oxygen species thanks to its pseudoperoxidase activity. The chain is Myoglobin (MB) from Balaenoptera acutorostrata (Common minke whale).